Here is a 24-residue protein sequence, read N- to C-terminus: Brevinin-1BYb (24 aa).

A disulfide bridge connects residues C18 and C24.

As to expression, expressed by the skin glands.

Its subcellular location is the secreted. Its function is as follows. Antibacterial activity against Gram-positive bacterium S.aureus and Gram-negative bacterium E.coli. Has moderate antifungal activity against C.albicans and strong hemolytic activity. The sequence is that of Brevinin-1BYb from Rana boylii (Foothill yellow-legged frog).